We begin with the raw amino-acid sequence, 799 residues long: High affinity nerve growth factor receptor (799 aa).

The first 32 residues, 1–32, serve as a signal peptide directing secretion; that stretch reads MLRGQRHGQLGWHRPAAGLGGLVTSLMLACAC. Residues 33–418 lie on the Extracellular side of the membrane; sequence AASCRETCCP…DPVEKKDETP (386 aa). 2 cysteine pairs are disulfide-bonded: Cys-36-Cys-41 and Cys-40-Cys-50. Asn-67 carries N-linked (GlcNAc...) asparagine glycosylation. 2 LRR repeats span residues 90-113 and 116-137; these read LGEL…AFHF and RLSH…TVQG. N-linked (GlcNAc...) asparagine glycans are attached at residues Asn-121, Asn-190, Asn-204, Asn-255, Asn-264, Asn-320, Asn-325, Asn-341, Asn-361, and Asn-404. The LRRCT domain maps to 148-219; the sequence is NPLHCSCALL…GDDVFLQCQV (72 aa). Cys-154 and Cys-193 are joined by a disulfide. Ig-like C2-type domains are found at residues 196 to 285 and 295 to 368; these read PSVK…VSVS and AVEQ…LAAN. Disulfide bonds link Cys-217–Cys-267 and Cys-302–Cys-348. A helical membrane pass occupies residues 419 to 442; sequence FGVSVAVGLAVSAALFLSALLLVL. Residues 443-799 are Cytoplasmic-facing; that stretch reads NKCGQRSKFG…APPSYLDVLG (357 aa). The segment at 472–493 is interaction with SQSTM1; it reads MTLGGSSLSPTEGKGSGLQGHI. A Phosphotyrosine; by autocatalysis modification is found at Tyr-499. One can recognise a Protein kinase domain in the interval 513–784; it reads IILKWELGEG…LSMKDVHARL (272 aa). ATP contacts are provided by residues 519–527 and Lys-547; that span reads LGEGAFGKV. Asp-653 serves as the catalytic Proton acceptor. Residues Tyr-679, Tyr-683, Tyr-684, and Tyr-794 each carry the phosphotyrosine; by autocatalysis modification.

It belongs to the protein kinase superfamily. Tyr protein kinase family. Insulin receptor subfamily. In terms of assembly, exists in a dynamic equilibrium between monomeric (low affinity) and dimeric (high affinity) structures. Homodimerization is induced by binding of a NGF dimer. Found in a complex, at least composed of KIDINS220, MAGI2, NTRK1 and RAPGEF2; the complex is mainly formed at late endosomes in a nerve growth factor (NGF)-dependent manner. Interacts with RAPGEF2; the interaction is strengthened after NGF stimulation. Interacts with SQSTM1; bridges NTRK1 to NGFR. Forms a ternary complex with NGFR and KIDINS220; this complex is affected by the expression levels of KIDINS220 and an increase in KIDINS220 expression leads to a decreased association of NGFR and NTRK1. Interacts (phosphorylated upon activation by NGF) with SHC1; mediates SHC1 phosphorylation and activation. Interacts (phosphorylated upon activation by NGF) with PLCG1; mediates PLCG1 phosphorylation and activation. Interacts (phosphorylated) with SH2B1 and SH2B2. Interacts with GRB2. Interacts with PIK3R1. Interacts with FRS2. Interacts with SORT1; may regulate NTRK1 anterograde axonal transport. Interacts with SH2D1A; regulates NTRK1. Interacts with NRADD. Interacts with RAB7A. Interacts with PTPRS. Interacts with USP36; USP36 does not deubiquitinate NTRK1. Interacts with GGA3. Interacts with TSPAN1; this interaction promotes NTRK1 stability. In terms of processing, ligand-mediated autophosphorylation. Interaction with SQSTM1 is phosphotyrosine-dependent. Autophosphorylation at Tyr-499 mediates interaction and phosphorylation of SHC1. N-glycosylated. Post-translationally, ubiquitinated. Undergoes polyubiquitination upon activation; regulated by NGFR. Ubiquitination by NEDD4L leads to degradation. Ubiquitination regulates the internalization of the receptor. As to expression, isoform Trka-II is primarily expressed in neuronal cells; isoform Trka-I is found in non-neuronal tissues.

Its subcellular location is the cell membrane. It is found in the early endosome membrane. It localises to the late endosome membrane. The protein localises to the recycling endosome membrane. It catalyses the reaction L-tyrosyl-[protein] + ATP = O-phospho-L-tyrosyl-[protein] + ADP + H(+). Its activity is regulated as follows. The pro-survival signaling effect of NTRK1 in neurons requires its endocytosis into signaling early endosomes and its retrograde axonal transport. This is regulated by different proteins including CFL1, RAC1 and SORT1. NTF3 is unable to induce this signaling probably due to the lability of the NTF3-NTRK1 complex in endosomes. SH2D1A inhibits the autophosphorylation of the receptor, and alters the recruitment and activation of downstream effectors and signaling cascades. Regulated by NGFR. In terms of biological role, receptor tyrosine kinase involved in the development and the maturation of the central and peripheral nervous systems through regulation of proliferation, differentiation and survival of sympathetic and nervous neurons. High affinity receptor for NGF which is its primary ligand. Can also bind and be activated by NTF3/neurotrophin-3. However, NTF3 only supports axonal extension through NTRK1 but has no effect on neuron survival. Upon dimeric NGF ligand-binding, undergoes homodimerization, autophosphorylation and activation. Recruits, phosphorylates and/or activates several downstream effectors including SHC1, FRS2, SH2B1, SH2B2 and PLCG1 that regulate distinct overlapping signaling cascades driving cell survival and differentiation. Through SHC1 and FRS2 activates a GRB2-Ras-MAPK cascade that regulates cell differentiation and survival. Through PLCG1 controls NF-Kappa-B activation and the transcription of genes involved in cell survival. Through SHC1 and SH2B1 controls a Ras-PI3 kinase-AKT1 signaling cascade that is also regulating survival. In absence of ligand and activation, may promote cell death, making the survival of neurons dependent on trophic factors. The polypeptide is High affinity nerve growth factor receptor (Ntrk1) (Rattus norvegicus (Rat)).